The chain runs to 408 residues: LL-diaminopimelate aminotransferase (408 aa).

Substrate is bound by residues Tyr15 and Gly42. Residues Tyr72, 108 to 109 (SK), Tyr132, Asn187, Tyr218, and 246 to 248 (SFS) each bind pyridoxal 5'-phosphate. Lys109, Tyr132, and Asn187 together coordinate substrate. Lys249 is modified (N6-(pyridoxal phosphate)lysine). Pyridoxal 5'-phosphate-binding residues include Arg257 and Asn292. Substrate is bound by residues Asn292 and Arg388.

It belongs to the class-I pyridoxal-phosphate-dependent aminotransferase family. LL-diaminopimelate aminotransferase subfamily. Homodimer. Pyridoxal 5'-phosphate is required as a cofactor.

It catalyses the reaction (2S,6S)-2,6-diaminopimelate + 2-oxoglutarate = (S)-2,3,4,5-tetrahydrodipicolinate + L-glutamate + H2O + H(+). It participates in amino-acid biosynthesis; L-lysine biosynthesis via DAP pathway; LL-2,6-diaminopimelate from (S)-tetrahydrodipicolinate (aminotransferase route): step 1/1. Functionally, involved in the synthesis of meso-diaminopimelate (m-DAP or DL-DAP), required for both lysine and peptidoglycan biosynthesis. Catalyzes the direct conversion of tetrahydrodipicolinate to LL-diaminopimelate. In Parasynechococcus marenigrum (strain WH8102), this protein is LL-diaminopimelate aminotransferase.